The sequence spans 488 residues: Glutamyl-tRNA(Gln) amidotransferase subunit A, mitochondrial (488 aa).

Active-site charge relay system residues include K62 and S140. S164 (acyl-ester intermediate) is an active-site residue. The disordered stretch occupies residues 205–228 (GHDDNDPTSITPQTRERIQDRLSR). Basic and acidic residues predominate over residues 218–227 (TRERIQDRLS).

This sequence belongs to the amidase family. GatA subfamily. In terms of assembly, subunit of the heterotrimeric GatCAB amidotransferase (AdT) complex, composed of A, B and C subunits.

The protein resides in the mitochondrion. It carries out the reaction L-glutamyl-tRNA(Gln) + L-glutamine + ATP + H2O = L-glutaminyl-tRNA(Gln) + L-glutamate + ADP + phosphate + H(+). Allows the formation of correctly charged Gln-tRNA(Gln) through the transamidation of misacylated Glu-tRNA(Gln) in the mitochondria. The reaction takes place in the presence of glutamine and ATP through an activated gamma-phospho-Glu-tRNA(Gln). The polypeptide is Glutamyl-tRNA(Gln) amidotransferase subunit A, mitochondrial (Tuber melanosporum (strain Mel28) (Perigord black truffle)).